Reading from the N-terminus, the 299-residue chain is Dye-decolorizing peroxidase YfeX (299 aa).

Histidine 215 is a binding site for heme.

The protein belongs to the DyP-type peroxidase family. The cofactor is heme b.

It is found in the cytoplasm. Its function is as follows. Has both general peroxidase activity and dye-decolorizing activity. Can catalyze the oxidation of 2,2'-azino-bis(3-ethylbenzothiazoline-6-sulphonic acid) (ABTS), and the phenolic compounds guaiacol and catechol. Also decolorizes the anthraquinone dye reactive blue 19 (RB19). The polypeptide is Dye-decolorizing peroxidase YfeX (Escherichia coli O157:H7).